We begin with the raw amino-acid sequence, 212 residues long: Peptide methionine sulfoxide reductase MsrA (212 aa).

Residues 1 to 14 (MNSIDKTQRITQSD) are compositionally biased toward polar residues. The interval 1–21 (MNSIDKTQRITQSDALPGRST) is disordered. Residue cysteine 52 is part of the active site.

This sequence belongs to the MsrA Met sulfoxide reductase family.

It carries out the reaction L-methionyl-[protein] + [thioredoxin]-disulfide + H2O = L-methionyl-(S)-S-oxide-[protein] + [thioredoxin]-dithiol. It catalyses the reaction [thioredoxin]-disulfide + L-methionine + H2O = L-methionine (S)-S-oxide + [thioredoxin]-dithiol. Has an important function as a repair enzyme for proteins that have been inactivated by oxidation. Catalyzes the reversible oxidation-reduction of methionine sulfoxide in proteins to methionine. The polypeptide is Peptide methionine sulfoxide reductase MsrA (Pectobacterium atrosepticum (strain SCRI 1043 / ATCC BAA-672) (Erwinia carotovora subsp. atroseptica)).